A 687-amino-acid chain; its full sequence is MLNKCSGSLTLLAVRRFCGPCRRLHYHKDNPNNINIAKNLLNNNIQARCSTNEASWKLAQKELDLKIREYEQKLKDVKLNDINKKSPLNIPDEVWTKFISEVNSYDKEKENHLSTGNHELRRTTPLKIGPLLLTRIGLLKSKNTASNNYSVDHIVSNLANDNTLLNRQVSTEEWNSHLRHLLNIPKCFLGVDIVEIVNFFNYLPQTVISKSSLEIWKAVEESGMKVMPDLLVLLMESTNASGDFRKTVQLYHLYQKSNAPPNGLVYQSYAIALSSLGKHKDLVALYSEQKSVSITPSKDFLNACIKAFSRTKEFTKAWEVFNFMKFTATSISPSAETYGLMIQICSSQYNPEKALDLYNEMKLRPIDPLTPTTFVINNLIHALATDVRFQTVAFSLLQDLSHYGLRPNHSTLYELIRLIAYSGKLDYMKDILDNFWVRQKLLPSILKVEQIFHFIFRALISAEVQTSSVTPDYTHFKEEVRKIIDSSKEPLIPFLKRSTLTENDLFLNAIYTFEYAKRKFPEALNSRLVTDFLNIFLERGSVQLFKEIYQLEFREMSTMEGSSMKVAKITLTYIYAIKLALLFNDFEFGYAAWQEYWHCKIHKLLPKEDASYEQKVVLLTLSLLSKNKHTSLARSLLLSHLDKGWTWNKHSLGFMRKMCSVMNDQATVYLIDSITNEIGINQRFTRK.

The N-terminal 49 residues, 1–49, are a transit peptide targeting the mitochondrion; that stretch reads MLNKCSGSLTLLAVRRFCGPCRRLHYHKDNPNNINIAKNLLNNNIQARC. PPR repeat units follow at residues 262 to 296, 297 to 331, 334 to 368, and 372 to 407; these read NGLV…SITP, SKDF…ATSI, SAET…PIDP, and TTFV…GLRP.

This sequence belongs to the CCM1 family. In terms of assembly, binds to mitochondrial small subunit 15S rRNA.

It is found in the mitochondrion. In terms of biological role, regulates mitochondrial small subunit maturation by controlling 15S rRNA 5'-end processing. Localizes to the 5' precursor of the 15S rRNA in a position that is subsequently occupied by mS47 in the mature yeast mtSSU. Uses structure and sequence-specific RNA recognition, binding to a single-stranded region of the precursor and specifically recognizing bases -6 to -1. The exchange of Ccm1 for mS47 is coupled to the irreversible removal of precursor rRNA that is accompanied by conformational changes of the mitoribosomal proteins uS5m and mS26. These conformational changes signal completion of 5'-end rRNA processing through protection of the mature 5'-end of the 15S rRNA and stabilization of mS47. The removal of the 5' precursor together with the dissociation of Ccm1 may be catalyzed by the 5'-3' exoribonuclease Pet127. Involved in the specific removal of group I introns in mitochondrial encoded transcripts. In Schizosaccharomyces pombe (strain 972 / ATCC 24843) (Fission yeast), this protein is Mitochondrial 15S rRNA processing factor ppr3.